The following is a 173-amino-acid chain: Translation initiation factor IF-3 (173 aa).

This sequence belongs to the IF-3 family. As to quaternary structure, monomer.

It is found in the cytoplasm. IF-3 binds to the 30S ribosomal subunit and shifts the equilibrium between 70S ribosomes and their 50S and 30S subunits in favor of the free subunits, thus enhancing the availability of 30S subunits on which protein synthesis initiation begins. The polypeptide is Translation initiation factor IF-3 (Aromatoleum aromaticum (strain DSM 19018 / LMG 30748 / EbN1) (Azoarcus sp. (strain EbN1))).